We begin with the raw amino-acid sequence, 1189 residues long: Pyruvate carboxylase (1189 aa).

One can recognise a Biotin carboxylation domain in the interval 21–473 (TMNKILVANR…WTTFIDDTPE (453 aa)). Lys139, Glu223, and His258 together coordinate ATP. The ATP-grasp domain maps to 143–340 (RNLAYAANVP…IVAAQIQIAA (198 aa)). The active site involves Arg315. The Pyruvate carboxyltransferase domain maps to 559–826 (LMIMDTTWRD…ETGIPEANAR (268 aa)). Residues 567-571 (RDAHQ) and Arg640 contribute to the substrate site. An a divalent metal cation-binding site is contributed by Asp568. The a divalent metal cation site is built by Lys736, His766, and His768. An N6-carboxylysine modification is found at Lys736. Thr900 is a substrate binding site. The region spanning 1099-1174 (KADAHNPNEI…DASDLIPKSS (76 aa)) is the Biotinyl-binding domain. Lys1140 is modified (N6-biotinyllysine).

Biotin serves as cofactor. Requires Zn(2+) as cofactor.

It is found in the cytoplasm. It catalyses the reaction hydrogencarbonate + pyruvate + ATP = oxaloacetate + ADP + phosphate + H(+). It functions in the pathway carbohydrate biosynthesis; gluconeogenesis. Pyruvate carboxylase catalyzes a 2-step reaction, involving the ATP-dependent carboxylation of the covalently attached biotin in the first step and the transfer of the carboxyl group to pyruvate in the second. The sequence is that of Pyruvate carboxylase (PYC1) from Komagataella pastoris (Yeast).